Here is a 247-residue protein sequence, read N- to C-terminus: UPF0280 protein Mevan_0550 (247 aa).

This sequence belongs to the UPF0280 family.

This chain is UPF0280 protein Mevan_0550, found in Methanococcus vannielii (strain ATCC 35089 / DSM 1224 / JCM 13029 / OCM 148 / SB).